The following is a 331-amino-acid chain: UPF0324 membrane protein SAS0317 (331 aa).

Helical transmembrane passes span 9 to 26 (FMIGLTLTFIVALFSFLA), 31 to 48 (ILDKVGALTIAILIAILY), 69 to 88 (LLRFAIILYGLKLNIFDIIG), 93 to 115 (LLAIDVGVVIFSIVMMLFVNKLL), 122 to 144 (ALLLGVGTGVCGAAAIAAVAPIF), 154 to 176 (SIGIIALIGTIFSLIYTAIYAIF), 183 to 202 (YGAWSGVSLHEIAHVVLAGG), 217 to 234 (LGRVFLLIPLTIVLILIM), 247 to 269 (ISIPYFLIGFVIMALVNTYVTIP), 273 to 295 (LNILNTVSTICLLMAMVALGLNV), and 308 to 330 (LMTIIITSICLSSLAFIVVHWLY).

This sequence belongs to the UPF0324 family.

It is found in the cell membrane. The polypeptide is UPF0324 membrane protein SAS0317 (Staphylococcus aureus (strain MSSA476)).